Consider the following 232-residue polypeptide: Phosphoadenosine 5'-phosphosulfate reductase (232 aa).

Catalysis depends on cysteine 228, which acts as the Nucleophile; cysteine thiosulfonate intermediate.

This sequence belongs to the PAPS reductase family. CysH subfamily.

The protein resides in the cytoplasm. It carries out the reaction [thioredoxin]-disulfide + sulfite + adenosine 3',5'-bisphosphate + 2 H(+) = [thioredoxin]-dithiol + 3'-phosphoadenylyl sulfate. The protein operates within sulfur metabolism; hydrogen sulfide biosynthesis; sulfite from sulfate: step 3/3. Functionally, catalyzes the formation of sulfite from phosphoadenosine 5'-phosphosulfate (PAPS) using thioredoxin as an electron donor. The chain is Phosphoadenosine 5'-phosphosulfate reductase from Synechococcus sp. (strain ATCC 27144 / PCC 6301 / SAUG 1402/1) (Anacystis nidulans).